An 839-amino-acid chain; its full sequence is RNA-directed RNA polymerase (839 aa).

Positions 504–619 (PVCVGLDASR…IMDQEHLAKF (116 aa)) constitute a RdRp catalytic domain.

It catalyses the reaction RNA(n) + a ribonucleoside 5'-triphosphate = RNA(n+1) + diphosphate. Functionally, RNA-dependent RNA polymerase replicates the viral genome. This is RNA-directed RNA polymerase from Groundnut rosette virus (strain MC1) (GRV).